Reading from the N-terminus, the 128-residue chain is Fruiting body differentiation protein 16 (128 aa).

A signal peptide spans 1–19 (MLFSHIVFVALSVFGLVQA).

Its function is as follows. Plays a role in the regulation of fruiting body development. This chain is Fruiting body differentiation protein 16, found in Flammulina velutipes (Agaricus velutipes).